Here is a 977-residue protein sequence, read N- to C-terminus: Vacuolar membrane protease (977 aa).

Residues 1-17 (MARSRTAGRCNPFAFYR) lie on the Cytoplasmic side of the membrane. Residues 18 to 38 (VPVTVFVTLIYVALLAPIIVV) traverse the membrane as a helical segment. The Vacuolar portion of the chain corresponds to 39 to 383 (HHILPAVPES…AFAVFEIHTL (345 aa)). N-linked (GlcNAc...) asparagine glycans are attached at residues Asn-113 and Asn-116. 2 residues coordinate Zn(2+): His-166 and Asp-178. Glu-212 functions as the Proton acceptor in the catalytic mechanism. Positions 213, 238, and 311 each coordinate Zn(2+). Residues 384-404 (FALSVTLLIVGPLTLFITSII) traverse the membrane as a helical segment. Residues 405 to 438 (LANQDRMYLFGISVPVDDGFGSVPLRGWRGFFRF) are Cytoplasmic-facing. A helical membrane pass occupies residues 439 to 459 (PFIFGSTTASVVALAYLMAKI). Residues 460–469 (NPMIAHSSEY) are Vacuolar-facing. The helical transmembrane segment at 470–490 (AVWSMMISAWVFVAWFLSRIA) threads the bilayer. Residues 491–500 (NFARPSALHR) lie on the Cytoplasmic side of the membrane. The helical transmembrane segment at 501-521 (IYVLTWMFLLTWVLLVITTVY) threads the bilayer. The Vacuolar segment spans residues 522–525 (ENRD). A helical membrane pass occupies residues 526–546 (GIASGYFVIFYAFGTFMATWI). The Cytoplasmic segment spans residues 547-659 (SYLELFSLPK…WSANLPKWTW (113 aa)). Positions 566 to 576 (GQISSRPTSLG) are enriched in polar residues. Residues 566-604 (GQISSRPTSLGGSRLLTPSGESVGQHPEDEEPTESTSLL) form a disordered region. The helical transmembrane segment at 660–680 (ILQFLLIAPIVIILIGQLGLL) threads the bilayer. Topologically, residues 681–696 (ITSAIHQTMQDGSSTL) are vacuolar. Residues 697 to 717 (VPYLIIALLTTFLFMPTLPFI) form a helical membrane-spanning segment. Over 718–726 (HRYTYHIPT) the chain is Cytoplasmic. The helical transmembrane segment at 727–747 (FLFLIFVATLVYNLVAFPFSG) threads the bilayer. The Vacuolar segment spans residues 748–977 (NNRTKLFFLQ…LVKGSRSFEV (230 aa)). N-linked (GlcNAc...) asparagine glycosylation is found at Asn-749 and Asn-791.

Belongs to the peptidase M28 family. It depends on Zn(2+) as a cofactor.

The protein localises to the vacuole membrane. May be involved in vacuolar sorting and osmoregulation. The polypeptide is Vacuolar membrane protease (Talaromyces marneffei (strain ATCC 18224 / CBS 334.59 / QM 7333) (Penicillium marneffei)).